We begin with the raw amino-acid sequence, 441 residues long: Chromatin structure-remodeling complex subunit SFH1 (441 aa).

A compositionally biased stretch (acidic residues) spans 124–137 (DFDANDFEDDDDDD). Disordered regions lie at residues 124 to 183 (DFDA…AAPP) and 383 to 407 (EMTP…KRES). Composition is skewed to basic and acidic residues over residues 138-147 (QSQRESRDGS) and 155-166 (DGTKKEEQDKFA).

This sequence belongs to the SNF5 family.

It localises to the nucleus. In terms of biological role, part of the chromatin structure-remodeling complex (RSC) which is involved in transcription regulation and nucleosome positioning. RSC is responsible for the transfer of a histone octamer from a nucleosome core particle to naked DNA. The reaction requires ATP and involves an activated RSC-nucleosome intermediate. Remodeling reaction also involves DNA translocation, DNA twist and conformational change. As a reconfigurer of centromeric and flanking nucleosomes, RSC complex is required both for proper kinetochore function in chromosome segregation and, via a PKC1-dependent signaling pathway, for organization of the cellular cytoskeleton. This subunit is essential for mitotic growth and required for cell cycle progression. This chain is Chromatin structure-remodeling complex subunit SFH1 (SFH1), found in Yarrowia lipolytica (strain CLIB 122 / E 150) (Yeast).